The primary structure comprises 596 residues: Arginine--tRNA ligase (596 aa).

The 'HIGH' region signature appears at 139–149; that stretch reads ANPTGPLHVGH.

It belongs to the class-I aminoacyl-tRNA synthetase family. Monomer.

The protein localises to the cytoplasm. The catalysed reaction is tRNA(Arg) + L-arginine + ATP = L-arginyl-tRNA(Arg) + AMP + diphosphate. The chain is Arginine--tRNA ligase from Paraburkholderia phytofirmans (strain DSM 17436 / LMG 22146 / PsJN) (Burkholderia phytofirmans).